The sequence spans 576 residues: Proline--tRNA ligase (576 aa).

It belongs to the class-II aminoacyl-tRNA synthetase family. ProS type 1 subfamily. As to quaternary structure, homodimer.

Its subcellular location is the cytoplasm. It catalyses the reaction tRNA(Pro) + L-proline + ATP = L-prolyl-tRNA(Pro) + AMP + diphosphate. Functionally, catalyzes the attachment of proline to tRNA(Pro) in a two-step reaction: proline is first activated by ATP to form Pro-AMP and then transferred to the acceptor end of tRNA(Pro). As ProRS can inadvertently accommodate and process non-cognate amino acids such as alanine and cysteine, to avoid such errors it has two additional distinct editing activities against alanine. One activity is designated as 'pretransfer' editing and involves the tRNA(Pro)-independent hydrolysis of activated Ala-AMP. The other activity is designated 'posttransfer' editing and involves deacylation of mischarged Ala-tRNA(Pro). The misacylated Cys-tRNA(Pro) is not edited by ProRS. The sequence is that of Proline--tRNA ligase from Bordetella petrii (strain ATCC BAA-461 / DSM 12804 / CCUG 43448).